A 402-amino-acid polypeptide reads, in one-letter code: NADH-quinone oxidoreductase subunit D (402 aa).

This sequence belongs to the complex I 49 kDa subunit family. NDH-1 is composed of 14 different subunits. Subunits NuoB, C, D, E, F, and G constitute the peripheral sector of the complex.

Its subcellular location is the cell inner membrane. It catalyses the reaction a quinone + NADH + 5 H(+)(in) = a quinol + NAD(+) + 4 H(+)(out). Functionally, NDH-1 shuttles electrons from NADH, via FMN and iron-sulfur (Fe-S) centers, to quinones in the respiratory chain. The immediate electron acceptor for the enzyme in this species is believed to be ubiquinone. Couples the redox reaction to proton translocation (for every two electrons transferred, four hydrogen ions are translocated across the cytoplasmic membrane), and thus conserves the redox energy in a proton gradient. The chain is NADH-quinone oxidoreductase subunit D from Maricaulis maris (strain MCS10) (Caulobacter maris).